Reading from the N-terminus, the 238-residue chain is Probable transcriptional regulatory protein CPn_0573/CP_0176/CPj0573/CpB0595 (238 aa).

The tract at residues 1–20 (MAGHSKWANTKHRKERADHK) is disordered. Basic residues predominate over residues 9–20 (NTKHRKERADHK).

This sequence belongs to the TACO1 family.

The protein resides in the cytoplasm. This is Probable transcriptional regulatory protein CPn_0573/CP_0176/CPj0573/CpB0595 from Chlamydia pneumoniae (Chlamydophila pneumoniae).